The primary structure comprises 224 residues: Adenylate kinase (224 aa).

10-15 (GSGKST) provides a ligand contact to ATP. The tract at residues 30–59 (SSGDLIRREIERKSSLGREMEAYLSRGDLI) is NMP. Residues serine 31, arginine 36, 57 to 59 (DLI), 83 to 86 (GYPR), and glutamine 90 each bind AMP. An LID region spans residues 124–161 (GRRICPNCGAVYHVKYNPPKVPGICDVCGSELIQRADD). Arginine 125 is a binding site for ATP. 2 residues coordinate Zn(2+): cysteine 128 and cysteine 131. Residue 134-135 (VY) participates in ATP binding. Residues cysteine 148 and cysteine 151 each coordinate Zn(2+). AMP contacts are provided by arginine 158 and arginine 169. Glycine 197 is an ATP binding site.

It belongs to the adenylate kinase family. As to quaternary structure, monomer.

It is found in the cytoplasm. The enzyme catalyses AMP + ATP = 2 ADP. It participates in purine metabolism; AMP biosynthesis via salvage pathway; AMP from ADP: step 1/1. Catalyzes the reversible transfer of the terminal phosphate group between ATP and AMP. Plays an important role in cellular energy homeostasis and in adenine nucleotide metabolism. The sequence is that of Adenylate kinase from Thermococcus kodakarensis (strain ATCC BAA-918 / JCM 12380 / KOD1) (Pyrococcus kodakaraensis (strain KOD1)).